The following is a 575-amino-acid chain: MPSAKQRGSKGGHGAASPSDKGAHPSGGADDVAKKPPAAPQQPQPPAPHPPQHPQNQAHRGGHRGRSSAATANASSASCSRRLGRVLNFLFYLSLVAAAAFSGWYVHHVLEEVQQVRRGHQDFSRQRDELGQGLQGVEQKVQSLQATFGTFESLLRNSQHKQDLTEKAVKEGESELNRISEVLQKLQNEILKDLSDGIHVVKDARERDFTSLENTVEERLTELTKSINDNIAIFTDVQKRSQKEINEVKMKVASLEESKGDRSQDVKTLKDAVKEVQASMMSRERDIEALKSSLQTMESDVYTEVRELVSLKQEQQAFKQAADSERLALQALTEKLLRSEESSSRLPEDIRRLEEELQQLKVGAHGSEEGAVFKDSKALEELQRQIEGLGARLQYVEDGVYSMQVASARHTESLESLLSKSQEYEQRLAMLQEHVGNLGSSSDLASTVRSLGETQLALSSDLKELKQSLGELPGTVESLQEQVLSLLSQDQAQAEGLPPQDFLDRLSSLDNLKSSVSQVESDLKMLRTAVDSLVAYSVKIETNENNLESAKGLLDDLRNDLDRLFLKVEKIHEKI.

Positions 1 to 73 (MPSAKQRGSK…RGRSSAATAN (73 aa)) are disordered. The Cytoplasmic portion of the chain corresponds to 1–85 (MPSAKQRGSK…SASCSRRLGR (85 aa)). A phosphoserine mark is found at S3, S17, and S19. N6-acetyllysine is present on K21. The span at 37-53 (PAAPQQPQPPAPHPPQH) shows a compositional bias: pro residues. C79 carries the S-palmitoyl cysteine; by ZDHHC2 lipid modification. The helical transmembrane segment at 86 to 108 (VLNFLFYLSLVAAAAFSGWYVHH) threads the bilayer. The Extracellular portion of the chain corresponds to 109-575 (VLEEVQQVRR…LKVEKIHEKI (467 aa)). The stretch at 125-193 (RQRDELGQGL…QKLQNEILKD (69 aa)) forms a coiled coil. A phosphoserine mark is found at S211, S292, and S367. 2 coiled-coil regions span residues 236–438 (DVQK…VGNL) and 507–575 (SSLD…HEKI).

As to quaternary structure, interacts with REEP5. Post-translationally, reversibly palmitoylated. Palmitoylation at Cys-79 by DHHC2 is required for its trafficking from the ER to the plasma membrane and for its perinuclear localization. In terms of processing, increased phosphorylation during mitosis prevents binding to microtubules. Expressed in cardiomyocytes (at protein level).

The protein localises to the endoplasmic reticulum membrane. Its subcellular location is the cell membrane. It localises to the cytoplasm. The protein resides in the cytoskeleton. It is found in the perinuclear region. High-affinity epithelial cell surface receptor for APF. In terms of biological role, mediates the anchoring of the endoplasmic reticulum to microtubules. In Mus musculus (Mouse), this protein is Cytoskeleton-associated protein 4 (Ckap4).